The following is a 433-amino-acid chain: 4-hydroxy-3-methylbut-2-en-1-yl diphosphate synthase (flavodoxin) (433 aa).

Residues 1 to 13 (MNKPETVTENSLA) are compositionally biased toward polar residues. A disordered region spans residues 1 to 23 (MNKPETVTENSLASDVAGPAPRH). 4 residues coordinate [4Fe-4S] cluster: Cys-314, Cys-317, Cys-360, and Glu-367.

This sequence belongs to the IspG family. It depends on [4Fe-4S] cluster as a cofactor.

It carries out the reaction (2E)-4-hydroxy-3-methylbut-2-enyl diphosphate + oxidized [flavodoxin] + H2O + 2 H(+) = 2-C-methyl-D-erythritol 2,4-cyclic diphosphate + reduced [flavodoxin]. It functions in the pathway isoprenoid biosynthesis; isopentenyl diphosphate biosynthesis via DXP pathway; isopentenyl diphosphate from 1-deoxy-D-xylulose 5-phosphate: step 5/6. Its function is as follows. Converts 2C-methyl-D-erythritol 2,4-cyclodiphosphate (ME-2,4cPP) into 1-hydroxy-2-methyl-2-(E)-butenyl 4-diphosphate. The protein is 4-hydroxy-3-methylbut-2-en-1-yl diphosphate synthase (flavodoxin) of Bradyrhizobium sp. (strain ORS 278).